The primary structure comprises 157 residues: Universal stress protein Sll1654 (157 aa).

Belongs to the universal stress protein A family.

This chain is Universal stress protein Sll1654, found in Synechocystis sp. (strain ATCC 27184 / PCC 6803 / Kazusa).